The sequence spans 190 residues: Probable calcium-binding protein CML27 (190 aa).

3 EF-hand domains span residues 27–62 (LNALRLRRVFDLFDRNGDGEITLDEMASALDALGLG), 115–150 (DDEGDMKEAFRVFDEDGDGFISAAELQAVLKKLGLP), and 153–188 (RNLATVQEMICNVDRDCDGRVDFGEFKCMMQGITVW). Ca(2+) contacts are provided by Asp-40, Asn-42, Asp-44, Glu-46, Glu-51, Asp-128, Asp-130, Asp-132, Glu-139, Asp-166, Asp-168, Asp-170, Arg-172, and Glu-177.

Functionally, potential calcium sensor. This Oryza sativa subsp. japonica (Rice) protein is Probable calcium-binding protein CML27 (CML27).